The sequence spans 437 residues: Selenocysteine lyase (437 aa).

An N-acetylmethionine modification is found at methionine 1. The segment at methionine 1–asparagine 30 is disordered. Residues arginine 7–tyrosine 26 are compositionally biased toward basic and acidic residues. Lysine 252 is subject to N6-(pyridoxal phosphate)lysine. The S-selanylcysteine intermediate role is filled by cysteine 380.

Belongs to the class-V pyridoxal-phosphate-dependent aminotransferase family. In terms of assembly, homodimer. Requires pyridoxal 5'-phosphate as cofactor.

It localises to the cytoplasm. Its subcellular location is the cytosol. The enzyme catalyses L-selenocysteine + AH2 = hydrogenselenide + L-alanine + A + H(+). Catalyzes the decomposition of L-selenocysteine to L-alanine and elemental selenium. The protein is Selenocysteine lyase (SCLY) of Bos taurus (Bovine).